The primary structure comprises 354 residues: N-acylethanolamine-hydrolyzing acid amidase (354 aa).

Positions 1–22 (MRSPGIVLLLLLLLLLPPGAAP) are cleaved as a signal peptide. N-linked (GlcNAc...) asparagine glycosylation is found at asparagine 35 and asparagine 104. The Nucleophile role is filled by cysteine 123. Residues asparagine 306, asparagine 312, and asparagine 352 are each glycosylated (N-linked (GlcNAc...) asparagine).

The protein belongs to the acid ceramidase family. As to quaternary structure, heterodimer of an alpha and a beta subunit, produced by autocatalytic cleavage. N-glycosylated. Tunicamycin treatment causes a reduction in specific activity against N-palmitoylethanolamine. In terms of processing, autoproteolytic cleavage at pH 4.5 gives rise to the alpha and beta subunit. Cleavage gives rise to a conformation change that activates the enzyme. The same catalytic Cys residue mediates the autoproteolytic cleavage and subsequent hydrolysis of lipid substrates.

It localises to the lysosome. Its subcellular location is the membrane. It carries out the reaction N-hexadecanoylethanolamine + H2O = ethanolamine + hexadecanoate. The enzyme catalyses an N-(long-chain fatty acyl)ethanolamine + H2O = a long-chain fatty acid + ethanolamine. It catalyses the reaction N-dodecanoylethanolamine + H2O = dodecanoate + ethanolamine. The catalysed reaction is N-tetradecanoylethanolamine + H2O = tetradecanoate + ethanolamine. It carries out the reaction an N-acylsphing-4-enine + H2O = sphing-4-enine + a fatty acid. The enzyme catalyses N-hexadecanoylsphing-4-enine + H2O = sphing-4-enine + hexadecanoate. It catalyses the reaction N-dodecanoylsphing-4-enine + H2O = dodecanoate + sphing-4-enine. It participates in lipid metabolism; fatty acid metabolism. Functionally, degrades bioactive fatty acid amides to their corresponding acids, with the following preference: N-palmitoylethanolamine &gt; N-myristoylethanolamine &gt; N-stearoylethanolamine &gt; N-oleoylethanolamine &gt; N-linoleoylethanolamine &gt; N-arachidonoylethanolamine. The polypeptide is N-acylethanolamine-hydrolyzing acid amidase (Cavia porcellus (Guinea pig)).